The chain runs to 264 residues: Thymidylate synthase (264 aa).

R21 serves as a coordination point for dUMP. H51 is a (6R)-5,10-methylene-5,6,7,8-tetrahydrofolate binding site. DUMP is bound at residue 126–127 (RR). Catalysis depends on C146, which acts as the Nucleophile. DUMP contacts are provided by residues 166–169 (RSCD), N177, and 207–209 (HLY). Residue D169 coordinates (6R)-5,10-methylene-5,6,7,8-tetrahydrofolate. (6R)-5,10-methylene-5,6,7,8-tetrahydrofolate is bound at residue A263.

The protein belongs to the thymidylate synthase family. Bacterial-type ThyA subfamily. In terms of assembly, homodimer.

It localises to the cytoplasm. It carries out the reaction dUMP + (6R)-5,10-methylene-5,6,7,8-tetrahydrofolate = 7,8-dihydrofolate + dTMP. The protein operates within pyrimidine metabolism; dTTP biosynthesis. Its function is as follows. Catalyzes the reductive methylation of 2'-deoxyuridine-5'-monophosphate (dUMP) to 2'-deoxythymidine-5'-monophosphate (dTMP) while utilizing 5,10-methylenetetrahydrofolate (mTHF) as the methyl donor and reductant in the reaction, yielding dihydrofolate (DHF) as a by-product. This enzymatic reaction provides an intracellular de novo source of dTMP, an essential precursor for DNA biosynthesis. The sequence is that of Thymidylate synthase from Yersinia pseudotuberculosis serotype O:1b (strain IP 31758).